We begin with the raw amino-acid sequence, 347 residues long: Quinolinate synthase (347 aa).

Residues H47 and S68 each contribute to the iminosuccinate site. Residue C113 coordinates [4Fe-4S] cluster. Iminosuccinate is bound by residues 139–141 (YAN) and S156. C200 lines the [4Fe-4S] cluster pocket. Residues 226–228 (HPE) and T243 each bind iminosuccinate. C297 is a binding site for [4Fe-4S] cluster.

Belongs to the quinolinate synthase family. Type 1 subfamily. Requires [4Fe-4S] cluster as cofactor.

The protein localises to the cytoplasm. The catalysed reaction is iminosuccinate + dihydroxyacetone phosphate = quinolinate + phosphate + 2 H2O + H(+). It functions in the pathway cofactor biosynthesis; NAD(+) biosynthesis; quinolinate from iminoaspartate: step 1/1. Functionally, catalyzes the condensation of iminoaspartate with dihydroxyacetone phosphate to form quinolinate. In Escherichia coli O7:K1 (strain IAI39 / ExPEC), this protein is Quinolinate synthase.